Consider the following 190-residue polypeptide: RNA-binding protein OPG065 (190 aa).

A Z-binding domain is found at 5–70; the sequence is YIDERSNAEI…DIPPRWFMTT (66 aa). The DRBM domain maps to 117–184; sequence NPVTVINEYC…AKLAVDKLLG (68 aa).

This sequence belongs to the orthopoxvirus OPG065 family. As to quaternary structure, interacts with host G1P2/ISG15. Interacts with host EIF2AK2/PKR. Interacts with host ZBP1.

Functionally, RNA-binding protein that plays a role in the inhibition of multiple cellular antiviral responses activated by double-stranded RNA (dsRNA), such as inhibition of PKR activation, necroptosis, and IFN-mediated antiviral activities. Recognizes and binds Z-RNA structures via its Z-binding domain and dsRNA via its DRBM domain: RNA-binding activity is required to escape host ZBP1-dependent necroptosis. Mechanistically, the Z-binding domain binds Z-RNAs that are produced during vaccinia virus infection, thereby competing with Z-RNA detection by host ZBP1, suppressing ZBP1-dependent necroptosis. Acts as a key inhibitor of the interferon response by blocking the phosphorylation and subsequent activation of IRF3 and IRF7 kinases that are required for interferon-alpha gene expression. Inhibits NF-kappa-B activation and the ubiquitin-like protein ISG15, which is an early antiviral protein. The binding with host ISG15 subsequently blocks host ISGylation. The sequence is that of RNA-binding protein OPG065 (OPG065) from Vaccinia virus (strain Western Reserve) (VACV).